A 409-amino-acid polypeptide reads, in one-letter code: Lissencephaly-1 homolog (409 aa).

The LisH domain maps to 7 to 39; sequence QREELNQAIADYLGTNGYADSLEAFRKEADLST. Residues 54–81 adopt a coiled-coil conformation; it reads TSVIRLQKKVMELEAKLTEAEKEVIEGA. WD repeat units lie at residues 104-145, 146-185, 189-228, 231-270, 273-332, 335-374, and 377-409; these read GHRA…RSLK, GHTDSVQDVAFDAQGKLLVSCSADLSIKLWDFQQSYACVK, GHDHNVSSVAFVPAGDYVLSASRDRTIKMWEVATGYCVKT, GHREWVRMVRVHIEGSLFATCSNDHTIRVWLTNSKDCKVE, DHEH…CLLT, GHDNWVRGLAFHPGGKYLVSASDDKTIRVWDLRNKRCMKT, and AHQHFCTSIDFHKAHPYVISGSVDQTVKVWECR.

It belongs to the WD repeat LIS1/nudF family.

The protein resides in the cytoplasm. It is found in the cytoskeleton. Its subcellular location is the microtubule organizing center. It localises to the centrosome. Its function is as follows. Positively regulates the activity of the minus-end directed microtubule motor protein dynein. May enhance dynein-mediated microtubule sliding by targeting dynein to the microtubule plus end. Required for several dynein- and microtubule-dependent processes. The polypeptide is Lissencephaly-1 homolog (Drosophila willistoni (Fruit fly)).